The chain runs to 508 residues: Lysine--tRNA ligase (508 aa).

Mg(2+) is bound by residues glutamate 416 and glutamate 423.

This sequence belongs to the class-II aminoacyl-tRNA synthetase family. In terms of assembly, homodimer. The cofactor is Mg(2+).

Its subcellular location is the cytoplasm. The catalysed reaction is tRNA(Lys) + L-lysine + ATP = L-lysyl-tRNA(Lys) + AMP + diphosphate. This is Lysine--tRNA ligase from Prochlorococcus marinus (strain MIT 9313).